The sequence spans 227 residues: Nudix hydrolase 27, chloroplastic (227 aa).

Residues 1–44 constitute a chloroplast transit peptide; the sequence is MAVKASGFIGKSAISVHLDFSSFPVKFSCLKQFSVSSPKPLVVL. In terms of domain architecture, Nudix hydrolase spans 61–208; the sequence is GYRKNVGICL…KRPVYEHVIK (148 aa). The short motif at 94 to 115 is the Nudix box element; the sequence is GGADEGEDLRNAAFRELREETG. Residues Glu109 and Glu113 each contribute to the Mn(2+) site.

It belongs to the Nudix hydrolase family. It depends on Mg(2+) as a cofactor. Mn(2+) serves as cofactor. Expressed in roots, leaves, stems and inflorescences.

The protein localises to the plastid. The protein resides in the chloroplast. Its function is as follows. Mediates the hydrolysis of some nucleoside diphosphate derivatives. Can use diadenosine 5',5'''-P(1)P(5) pentaphosphate (Ap(5)A) as substrates. The protein is Nudix hydrolase 27, chloroplastic (NUDT27) of Arabidopsis thaliana (Mouse-ear cress).